We begin with the raw amino-acid sequence, 268 residues long: Type III pantothenate kinase 1 (268 aa).

6-13 (DIGNTNIT) lines the ATP pocket. Substrate contacts are provided by residues Tyr100 and 107–110 (GTDR). Asp109 serves as the catalytic Proton acceptor. Asp133 lines the K(+) pocket. Thr136 is an ATP binding site.

The protein belongs to the type III pantothenate kinase family. Homodimer. It depends on NH4(+) as a cofactor. K(+) is required as a cofactor.

The protein localises to the cytoplasm. It carries out the reaction (R)-pantothenate + ATP = (R)-4'-phosphopantothenate + ADP + H(+). It participates in cofactor biosynthesis; coenzyme A biosynthesis; CoA from (R)-pantothenate: step 1/5. Catalyzes the phosphorylation of pantothenate (Pan), the first step in CoA biosynthesis. The polypeptide is Type III pantothenate kinase 1 (Symbiobacterium thermophilum (strain DSM 24528 / JCM 14929 / IAM 14863 / T)).